Reading from the N-terminus, the 592-residue chain is Thiol:disulfide interchange protein DsbD (592 aa).

Positions 1-19 (MKLIASFSIFMLMSIWSFA) are cleaved as a signal peptide. Intrachain disulfides connect Cys-130–Cys-136 and Cys-204–Cys-326. Helical transmembrane passes span 186–206 (IWVL…PCVF), 229–249 (FVLS…LGLV), 265–285 (IILG…FGAW), 318–338 (ISGL…LLYI), 345–365 (LLGF…LILF), 379–399 (WMNI…LMFV), 406–426 (MATD…FYVM), and 440–460 (ALVI…TIFG). One can recognise a Thioredoxin domain in the interval 443–592 (IFIGLFASAM…AFAAHAKNIL (150 aa)). Cysteines 508 and 511 form a disulfide.

The protein belongs to the thioredoxin family. DsbD subfamily.

It is found in the cell inner membrane. It catalyses the reaction [protein]-dithiol + NAD(+) = [protein]-disulfide + NADH + H(+). It carries out the reaction [protein]-dithiol + NADP(+) = [protein]-disulfide + NADPH + H(+). Its function is as follows. Required to facilitate the formation of correct disulfide bonds in some periplasmic proteins and for the assembly of the periplasmic c-type cytochromes. Acts by transferring electrons from cytoplasmic thioredoxin to the periplasm. This transfer involves a cascade of disulfide bond formation and reduction steps. The sequence is that of Thiol:disulfide interchange protein DsbD from Pseudoalteromonas atlantica (strain T6c / ATCC BAA-1087).